Here is a 603-residue protein sequence, read N- to C-terminus: Matrix metalloproteinase-17 (603 aa).

An N-terminal signal peptide occupies residues M1 to G35. The propeptide occupies G36–R125. The Cysteine switch motif lies at P108–L115. Residue C110 participates in Zn(2+) binding. N-linked (GlcNAc...) asparagine glycosylation occurs at N137. H248 serves as a coordination point for Zn(2+). Residue E249 is part of the active site. Zn(2+) contacts are provided by H252 and H258. The segment at S301–P329 is disordered. N318 carries an N-linked (GlcNAc...) asparagine glycan. Cysteines 332 and 523 form a disulfide. Hemopexin repeat units lie at residues S333–L378, L382–P427, P428–V475, and P476–C523. The segment at D537–P571 is disordered. S565 is lipidated: GPI-anchor amidated serine. The propeptide at G566–L603 is removed in mature form.

It belongs to the peptidase M10A family. The cofactor is Zn(2+). Ca(2+) is required as a cofactor. In terms of processing, the precursor is cleaved by a furin endopeptidase. Expressed in brain, leukocytes, colon, ovary testis and breast cancer. Expressed also in many transformed and non-transformed cell types.

It localises to the cell membrane. The protein localises to the secreted. The protein resides in the extracellular space. Its subcellular location is the extracellular matrix. Its function is as follows. Endopeptidase that degrades various components of the extracellular matrix, such as fibrin. May be involved in the activation of membrane-bound precursors of growth factors or inflammatory mediators, such as tumor necrosis factor-alpha. May also be involved in tumoral process. Cleaves pro-TNF-alpha at the '74-Ala-|-Gln-75' site. Not obvious if able to proteolytically activate progelatinase A. Does not hydrolyze collagen types I, II, III, IV and V, gelatin, fibronectin, laminin, decorin nor alpha1-antitrypsin. The polypeptide is Matrix metalloproteinase-17 (MMP17) (Homo sapiens (Human)).